Consider the following 317-residue polypeptide: N-acetylmuramoyl-L-alanine amidase XlyB (317 aa).

Positions Met1–Ala39 are cleaved as a signal peptide. Residues Ala40–His142 form the N-acetylmuramoyl-L-alanine amidase domain. Residues Ser177–Leu221 form the LysM domain.

The protein belongs to the N-acetylmuramoyl-L-alanine amidase 2 family.

It is found in the secreted. The enzyme catalyses Hydrolyzes the link between N-acetylmuramoyl residues and L-amino acid residues in certain cell-wall glycopeptides.. Its function is as follows. Autolysins are involved in some important biological processes such as cell separation, cell-wall turnover, competence for genetic transformation, formation of the flagella and sporulation. This Bacillus subtilis (strain 168) protein is N-acetylmuramoyl-L-alanine amidase XlyB (xlyB).